The chain runs to 1499 residues: Collagen alpha-2(V) chain (1499 aa).

An N-terminal signal peptide occupies residues 1-26; that stretch reads MMANWAEARPLLILIVLLGQFVSIKA. Residues 39 to 97 enclose the VWFC domain; it reads IACTQNGQMYLNRDIWKPAPCQICVCDNGAILCDKIECQDVLDCADPVTPPGECCPVCS. Residues 104–1268 form a disordered region; the sequence is NTNFGRGRKG…DDKNKTDPGV (1165 aa). Over residues 170–182 the composition is skewed to pro residues; it reads PGAPGPPGHPSHP. Low complexity predominate over residues 212 to 227; it reads PGSVGPVGPRGPQGLQ. Pro residues predominate over residues 236–248; it reads TGPPGEPGDPGPM. Hydroxyproline occurs at positions 290, 293, and 296. 2 stretches are compositionally biased toward low complexity: residues 322–340 and 427–443; these read EAGP…PRGM and TPGA…SGPP. A Cell attachment site motif is present at residues 506–508; the sequence is RGD. 2 stretches are compositionally biased toward low complexity: residues 604 to 626 and 694 to 709; these read SIGI…SGDP and DQGV…PLGP. Hydroxyproline occurs at positions 611 and 617. The segment covering 710–721 has biased composition (basic and acidic residues); sequence RGERGNPGERGE. The span at 732-741 shows a compositional bias: gly residues; the sequence is GMAGGHGPDG. Positions 742-758 are enriched in low complexity; sequence PKGSPGPSGTPGDTGPP. The segment covering 776 to 787 has biased composition (basic and acidic residues); the sequence is KGDRGGIGEKGA. The segment covering 826 to 841 has biased composition (low complexity); that stretch reads PPGSRGNPGSRGENGP. Gly residues predominate over residues 894–903; that stretch reads GLKGGRGTQG. Pro919 carries the post-translational modification 3-hydroxyproline; partial. Residues 919–929 show a composition bias toward pro residues; sequence PPGPAGAPGPA. 6 consecutive short sequence motifs (cell attachment site) follow at residues 944-946, 1067-1069, 1070-1072, 1100-1102, 1127-1129, and 1136-1138; these read RGD. A compositionally biased stretch (basic and acidic residues) spans 1063–1072; it reads AVGERGDRGD. Over residues 1093 to 1114 the composition is skewed to low complexity; the sequence is APGDAGQRGDPGSRGPIGPPGR. The segment covering 1127-1141 has biased composition (basic and acidic residues); the sequence is RGDKGDHGDRGDRGQ. A 3-hydroxyproline; partial modification is found at Pro1156. Composition is skewed to pro residues over residues 1171–1181 and 1211–1226; these read PFGPRGPPGPV and EGPP…PGPP. The propeptide at 1230-1499 is C-terminal propeptide; that stretch reads TAALGDIMGH…GVEIGPVCFV (270 aa). Asn1262 carries N-linked (GlcNAc...) asparagine glycosylation. The Fibrillar collagen NC1 domain occupies 1266 to 1499; sequence PGVHATLKSL…GVEIGPVCFV (234 aa). Intrachain disulfides connect Cys1296–Cys1328, Cys1336–Cys1497, and Cys1405–Cys1450. Residues Asp1314, Asn1316, Gln1317, and Asp1322 each contribute to the Ca(2+) site. Asn1400 carries N-linked (GlcNAc...) asparagine glycosylation.

It belongs to the fibrillar collagen family. In terms of assembly, trimers of two alpha 1(V) and one alpha 2(V) chains in most tissues and trimers of one alpha 1(V), one alpha 2(V), and one alpha 3(V) chains in placenta. Post-translationally, prolines at the third position of the tripeptide repeating unit (G-X-P) are hydroxylated in some or all of the chains. Probably 3-hydroxylated on Pro-919 and Pro-1156 by LEPREL1.

It is found in the secreted. The protein localises to the extracellular space. It localises to the extracellular matrix. Its function is as follows. Type V collagen is a member of group I collagen (fibrillar forming collagen). It is a minor connective tissue component of nearly ubiquitous distribution. Type V collagen binds to DNA, heparan sulfate, thrombospondin, heparin, and insulin. Type V collagen is a key determinant in the assembly of tissue-specific matrices. This is Collagen alpha-2(V) chain (COL5A2) from Homo sapiens (Human).